A 298-amino-acid polypeptide reads, in one-letter code: Glycine--tRNA ligase alpha subunit (298 aa).

This sequence belongs to the class-II aminoacyl-tRNA synthetase family. Tetramer of two alpha and two beta subunits.

The protein localises to the cytoplasm. It carries out the reaction tRNA(Gly) + glycine + ATP = glycyl-tRNA(Gly) + AMP + diphosphate. The sequence is that of Glycine--tRNA ligase alpha subunit from Helicobacter pylori (strain Shi470).